Consider the following 110-residue polypeptide: Large ribosomal subunit protein uL22 (110 aa).

The protein belongs to the universal ribosomal protein uL22 family. Part of the 50S ribosomal subunit.

This protein binds specifically to 23S rRNA; its binding is stimulated by other ribosomal proteins, e.g. L4, L17, and L20. It is important during the early stages of 50S assembly. It makes multiple contacts with different domains of the 23S rRNA in the assembled 50S subunit and ribosome. Functionally, the globular domain of the protein is located near the polypeptide exit tunnel on the outside of the subunit, while an extended beta-hairpin is found that lines the wall of the exit tunnel in the center of the 70S ribosome. This Citrobacter koseri (strain ATCC BAA-895 / CDC 4225-83 / SGSC4696) protein is Large ribosomal subunit protein uL22.